The primary structure comprises 200 residues: Pyridoxal 5'-phosphate synthase subunit PdxT (200 aa).

Position 46-48 (46-48) interacts with L-glutamine; that stretch reads GES. Catalysis depends on Cys78, which acts as the Nucleophile. L-glutamine contacts are provided by residues Arg107 and 138 to 139; that span reads IR. Catalysis depends on charge relay system residues His175 and Glu177.

Belongs to the glutaminase PdxT/SNO family. In the presence of PdxS, forms a dodecamer of heterodimers. Only shows activity in the heterodimer.

The enzyme catalyses aldehydo-D-ribose 5-phosphate + D-glyceraldehyde 3-phosphate + L-glutamine = pyridoxal 5'-phosphate + L-glutamate + phosphate + 3 H2O + H(+). It catalyses the reaction L-glutamine + H2O = L-glutamate + NH4(+). It participates in cofactor biosynthesis; pyridoxal 5'-phosphate biosynthesis. Catalyzes the hydrolysis of glutamine to glutamate and ammonia as part of the biosynthesis of pyridoxal 5'-phosphate. The resulting ammonia molecule is channeled to the active site of PdxS. The sequence is that of Pyridoxal 5'-phosphate synthase subunit PdxT from Corynebacterium glutamicum (strain R).